Here is a 124-residue protein sequence, read N- to C-terminus: Ribonuclease P protein subunit p14 (124 aa).

Belongs to the eukaryotic/archaeal RNase P protein component 2 family. In terms of assembly, RNase P consists of a catalytic RNA moiety and about 10 protein subunits; POP1, POP4, POP5, POP7, RPP14, RPP21, RPP25, RPP30, RPP38 and RPP40. Within the RNase P complex, POP1, POP7 and RPP25 form the 'finger' subcomplex, POP5, RPP14, RPP40 and homodimeric RPP30 form the 'palm' subcomplex, and RPP21, POP4 and RPP38 form the 'wrist' subcomplex. All subunits of the RNase P complex interact with the catalytic RNA.

It is found in the nucleus. The protein localises to the nucleolus. In terms of biological role, component of ribonuclease P, a ribonucleoprotein complex that generates mature tRNA molecules by cleaving their 5'-ends. The sequence is that of Ribonuclease P protein subunit p14 (RPP14) from Homo sapiens (Human).